The primary structure comprises 679 residues: Methionine--tRNA ligase (679 aa).

Residues 14 to 24 (PYANGSIHLGH) carry the 'HIGH' region motif. Positions 145, 148, 158, and 161 each coordinate Zn(2+). The short motif at 331–335 (KMSKS) is the 'KMSKS' region element. Lys-334 serves as a coordination point for ATP. A tRNA-binding domain is found at 577 to 679 (TFAAVDLRVA…SGAKPGQRIK (103 aa)).

This sequence belongs to the class-I aminoacyl-tRNA synthetase family. MetG type 1 subfamily. In terms of assembly, homodimer. Requires Zn(2+) as cofactor.

The protein localises to the cytoplasm. It carries out the reaction tRNA(Met) + L-methionine + ATP = L-methionyl-tRNA(Met) + AMP + diphosphate. Its function is as follows. Is required not only for elongation of protein synthesis but also for the initiation of all mRNA translation through initiator tRNA(fMet) aminoacylation. The sequence is that of Methionine--tRNA ligase from Pseudomonas putida (strain ATCC 700007 / DSM 6899 / JCM 31910 / BCRC 17059 / LMG 24140 / F1).